The following is a 358-amino-acid chain: MSACTSFLRVAGDKVNLSFSSNSWRTTSEEKRYDERMANEDPEKTYQSIRRAAEVHRQVRQHARRHIRPGMTMTEIANNIEDGTRALVEEDGLLSGVGFPTGLSLNNCAAHYTPNAGDTTVLQKGDVLKVDIGVHVKGRIADSAFTLTWEPTYNKLLEAVKAATDTGIRESGIDARLGEIAGAIQETMESYEVEVNGTVYPVKPIENLSGHSINPYQIHGGKSILLVKNDDQTKMEEGEYFAIETFGSTGRGRIVESGEVSHYARRMDAPHVPLRLTSAKTLLKSINKNFGTLPFCRRYLDRAGESKYLLALNHLVGQGIVQDYPPLCDQRGSMTAQFEHTILLRPTVKEVVTRGDDY.

Histidine 111 contacts substrate. Positions 131, 142, and 211 each coordinate a divalent metal cation. Histidine 219 is a binding site for substrate. Residues glutamate 244 and glutamate 339 each coordinate a divalent metal cation.

Belongs to the peptidase M24A family. Methionine aminopeptidase eukaryotic type 2 subfamily. Requires Co(2+) as cofactor. It depends on Zn(2+) as a cofactor. The cofactor is Mn(2+). Fe(2+) serves as cofactor.

Its subcellular location is the cytoplasm. The enzyme catalyses Release of N-terminal amino acids, preferentially methionine, from peptides and arylamides.. Functionally, cotranslationally removes the N-terminal methionine from nascent proteins. The N-terminal methionine is often cleaved when the second residue in the primary sequence is small and uncharged (Met-Ala-, Cys, Gly, Pro, Ser, Thr, or Val). The polypeptide is Methionine aminopeptidase 2 (Laccaria bicolor (strain S238N-H82 / ATCC MYA-4686) (Bicoloured deceiver)).